The primary structure comprises 346 residues: Zinc-type alcohol dehydrogenase-like protein C1773.06c (346 aa).

It belongs to the zinc-containing alcohol dehydrogenase family. Quinone oxidoreductase subfamily.

Its subcellular location is the cytoplasm. This Schizosaccharomyces pombe (strain 972 / ATCC 24843) (Fission yeast) protein is Zinc-type alcohol dehydrogenase-like protein C1773.06c.